A 789-amino-acid chain; its full sequence is Aconitate hydratase, mitochondrial (789 aa).

The N-terminal 32 residues, 1-32, are a transit peptide targeting the mitochondrion; that stretch reads MFCKISRAPARMGSRIFTQSTLRSFSCAPVAA. Substrate-binding positions include glutamine 106 and 199-201; that span reads DSH. [4Fe-4S] cluster is bound by residues cysteine 392, cysteine 455, and cysteine 458. Substrate is bound by residues arginine 481, arginine 486, arginine 613, and 676 to 677; that span reads SR.

Belongs to the aconitase/IPM isomerase family. Monomer. The cofactor is [4Fe-4S] cluster.

Its subcellular location is the mitochondrion. The enzyme catalyses citrate = D-threo-isocitrate. It participates in carbohydrate metabolism; tricarboxylic acid cycle; isocitrate from oxaloacetate: step 2/2. In terms of biological role, catalyzes the isomerization of citrate to isocitrate via cis-aconitate, a step in the citric acid cycle. The sequence is that of Aconitate hydratase, mitochondrial from Schizosaccharomyces pombe (strain 972 / ATCC 24843) (Fission yeast).